We begin with the raw amino-acid sequence, 243 residues long: Precursor of CEP9 (243 aa).

The signal sequence occupies residues 1–26; sequence MKLLSITLTSIVISMVFYQTPITTEA. The propeptide occupies 28 to 44; sequence SLRKTNDQDHFKAGFTD. Disordered stretches follow at residues 42 to 63, 91 to 173, and 189 to 243; these read FTDD…KKGN, KTGS…VKGF, and NGQD…EPKA. The residue at position 48 (Pro-48) is a Hydroxyproline; partial. The residue at position 51 (Pro-51) is a Hydroxyproline. A Hydroxyproline; partial modification is found at Pro-55. Positions 60–96 are excised as a propeptide; the sequence is KKGNVNVEGFQDDFKPTEGRKLLKTNVQDHFKTGSTD. Residues Pro-100, Pro-103, and Pro-107 each carry the hydroxyproline modification. The propeptide occupies 112–148; sequence KKGNVNVESSEDDFKHKEGRKLQQTNGQNHFKTGSTD. The span at 133–147 shows a compositional bias: polar residues; the sequence is LQQTNGQNHFKTGST. Residues Pro-152, Pro-155, and Pro-159 each carry the hydroxyproline modification. Positions 164–200 are excised as a propeptide; sequence KKGHANVKGFKDDFAPTEEIRLQKMNGQDHFKTGSTD. Residues Pro-204, Pro-207, and Pro-211 each carry the hydroxyproline modification. Positions 216–219 are excised as a propeptide; sequence KKGD. Residues Pro-223, Pro-226, and Pro-230 each carry the hydroxyproline modification. Residues 235-243 constitute a propeptide that is removed on maturation; the sequence is AVKNDEPKA.

The protein belongs to the C-terminally encoded plant signaling peptide (CEP) family. Interacts with CEP receptors (e.g. CEPR1 and CEPR2). In terms of processing, hydroxylated peptide is more active than non-hydroxylated peptide. The mature small signaling peptide is generated by proteolytic processing of the longer precursor. As to expression, expressed in lateral root primordia and in lateral roots excluding the meristem region. Also present in the aerial tissues, such as leaf petioles and the shoot apex region.

It is found in the secreted. It localises to the extracellular space. Its subcellular location is the apoplast. Extracellular signaling peptide that represses primary root growth rate and significantly inhibits lateral root formation. Modulates leaf morphology. Regulates systemic nitrogen (N)-demand signaling. Mediates up-regulation of genes involved in N uptake and assimilation pathways. This Arabidopsis thaliana (Mouse-ear cress) protein is Precursor of CEP9.